The following is a 188-amino-acid chain: MSIKSDKWIRRMSEQHGMIEPFEAGQVRESEKGRVISYGTSSYGYDVRCSNEFKIFTNVHSATVDPKNFDENSFVNYTGDVCIIPPNSFALARTVEYFRIPRSVLTICLGKSTYARCGIIVNVTPLEPEWEGQVTLEFSNTTNLPAKIYANEGVAQMLFFESDEICETSYKDRGGKYLGQTGVTLPRT.

Residues 111–116 (KSTYAR), 135–137 (TLE), Gln-156, Tyr-170, and Gln-180 each bind dCTP. Glu-137 (proton donor/acceptor) is an active-site residue.

It belongs to the dCTP deaminase family. As to quaternary structure, homotrimer.

The enzyme catalyses dCTP + H2O + H(+) = dUTP + NH4(+). It functions in the pathway pyrimidine metabolism; dUMP biosynthesis; dUMP from dCTP (dUTP route): step 1/2. Catalyzes the deamination of dCTP to dUTP. This Marinobacter nauticus (strain ATCC 700491 / DSM 11845 / VT8) (Marinobacter aquaeolei) protein is dCTP deaminase.